We begin with the raw amino-acid sequence, 250 residues long: MRPILIAGNWKMHKTQAEAREFLRELGLALRSSPSGSASQRQIILCVPFTDLAVVAEQSRGSDIAVGAQNLHWEDQGAFTGEISGPMLAELGVRYVIVGHSERRQYFGETDETVNRRLAAAQRHGLTPILCVGESQQQREQGLTESWIVGQLDRALQGIDLENLVIAYEPIWAIGTGQTCAAQEANRVIGLIRQHLGNAQLPILYGGSVKAGNIDELMAQPEIDGVLVGGASLDPQEFARIVNFQALAPA.

9–11 serves as a coordination point for substrate; the sequence is NWK. Histidine 100 functions as the Electrophile in the catalytic mechanism. Glutamate 169 (proton acceptor) is an active-site residue. Residues glycine 175, serine 208, and 229–230 contribute to the substrate site; that span reads GG.

Belongs to the triosephosphate isomerase family. As to quaternary structure, homodimer.

The protein localises to the cytoplasm. It carries out the reaction D-glyceraldehyde 3-phosphate = dihydroxyacetone phosphate. It functions in the pathway carbohydrate biosynthesis; gluconeogenesis. Its pathway is carbohydrate degradation; glycolysis; D-glyceraldehyde 3-phosphate from glycerone phosphate: step 1/1. Involved in the gluconeogenesis. Catalyzes stereospecifically the conversion of dihydroxyacetone phosphate (DHAP) to D-glyceraldehyde-3-phosphate (G3P). This Synechococcus sp. (strain JA-2-3B'a(2-13)) (Cyanobacteria bacterium Yellowstone B-Prime) protein is Triosephosphate isomerase.